A 75-amino-acid chain; its full sequence is Carwaprin-b (75 aa).

The N-terminal stretch at 1–24 (MSSGGLLLLLGLLTLWAELTPVSS) is a signal peptide. The region spanning 27 to 72 (RPKKPGLCPPRPQKPPCVRECKNDWRCPGEQKCCRYGCIYECRDPI) is the WAP domain. 4 disulfides stabilise this stretch: Cys-34-Cys-60, Cys-43-Cys-64, Cys-47-Cys-59, and Cys-53-Cys-68.

This sequence belongs to the venom waprin family. As to expression, expressed by the venom gland.

Its subcellular location is the secreted. Its function is as follows. Damages membranes of susceptible bacteria. Has no hemolytic activity. Not toxic to mice. Does not inhibit the proteinases elastase and cathepsin G. This chain is Carwaprin-b, found in Tropidechis carinatus (Australian rough-scaled snake).